Here is a 412-residue protein sequence, read N- to C-terminus: Fringe glycosyltransferase (412 aa).

Residues 1–15 are Cytoplasmic-facing; it reads MMSLTVLSPPQRFKR. A helical; Signal-anchor for type II membrane protein transmembrane segment spans residues 16–34; it reads ILQAMMLAVAVVYMTLLLY. The Lumenal portion of the chain corresponds to 35 to 412; that stretch reads QSAYGYPGIQ…FPYFSFCPPR (378 aa). R164 contacts substrate. 2 cysteine pairs are disulfide-bonded: C204/C215 and C233/C297. Residue D237 participates in substrate binding. D238 lines the Mn(2+) pocket. The active site involves D327. H351 is a Mn(2+) binding site. A disulfide bridge connects residues C400 and C409.

The protein belongs to the glycosyltransferase 31 family. Mn(2+) is required as a cofactor. In terms of tissue distribution, expressed in dorsal cells.

The protein resides in the golgi apparatus membrane. It catalyses the reaction 3-O-(alpha-L-fucosyl)-L-threonyl-[EGF-like domain protein] + UDP-N-acetyl-alpha-D-glucosamine = 3-O-(N-acetyl-beta-D-glucosaminyl-(1-&gt;3)-alpha-L-fucosyl)-L-threonyl-[EGF-like domain protein] + UDP + H(+). The enzyme catalyses 3-O-(alpha-L-fucosyl)-L-seryl-[EGF-like domain protein] + UDP-N-acetyl-alpha-D-glucosamine = 3-O-(N-acetyl-beta-D-glucosaminyl-(1-&gt;3)-alpha-L-fucosyl)-L-seryl-[EGF-like domain protein] + UDP + H(+). Its function is as follows. Glycosyltransferase involved in the elongation of O-linked ligands to activate Notch signaling. Possesses fucose-specific beta-1,3-N-acetylglucosaminyltransferase activity; extends the O-linked fucose on the Notch EGF repeats. Boundary-specific cell-signaling molecule that is responsible for dorsal-ventral cell interactions during wing development. This chain is Fringe glycosyltransferase (fng), found in Drosophila melanogaster (Fruit fly).